The primary structure comprises 111 residues: UPF0122 protein CKR_1296 (111 aa).

Belongs to the UPF0122 family.

In terms of biological role, might take part in the signal recognition particle (SRP) pathway. This is inferred from the conservation of its genetic proximity to ftsY/ffh. May be a regulatory protein. The polypeptide is UPF0122 protein CKR_1296 (Clostridium kluyveri (strain NBRC 12016)).